The following is a 427-amino-acid chain: Enolase (427 aa).

Q163 contributes to the (2R)-2-phosphoglycerate binding site. E205 serves as the catalytic Proton donor. Residues D242, E285, and D312 each coordinate Mg(2+). Residues K337, R366, S367, and K388 each coordinate (2R)-2-phosphoglycerate. K337 serves as the catalytic Proton acceptor.

This sequence belongs to the enolase family. Requires Mg(2+) as cofactor.

It is found in the cytoplasm. It localises to the secreted. The protein resides in the cell surface. The catalysed reaction is (2R)-2-phosphoglycerate = phosphoenolpyruvate + H2O. It participates in carbohydrate degradation; glycolysis; pyruvate from D-glyceraldehyde 3-phosphate: step 4/5. In terms of biological role, catalyzes the reversible conversion of 2-phosphoglycerate (2-PG) into phosphoenolpyruvate (PEP). It is essential for the degradation of carbohydrates via glycolysis. In Xanthobacter autotrophicus (strain ATCC BAA-1158 / Py2), this protein is Enolase.